The following is a 363-amino-acid chain: Dihydroorotate dehydrogenase (quinone) (363 aa).

FMN contacts are provided by residues 67–71 and Thr91; that span reads AGFDK. Position 71 (Lys71) interacts with substrate. Substrate is bound at residue 116–120; the sequence is NRMGF. The FMN site is built by Asn156 and Asn189. Substrate is bound at residue Asn189. The active-site Nucleophile is Ser192. Asn194 contacts substrate. FMN-binding residues include Lys231 and Thr259. 260 to 261 lines the substrate pocket; sequence NT. FMN-binding positions include Gly287, Gly316, and 337–338; that span reads YT.

It belongs to the dihydroorotate dehydrogenase family. Type 2 subfamily. Monomer. It depends on FMN as a cofactor.

The protein resides in the cell membrane. It carries out the reaction (S)-dihydroorotate + a quinone = orotate + a quinol. It participates in pyrimidine metabolism; UMP biosynthesis via de novo pathway; orotate from (S)-dihydroorotate (quinone route): step 1/1. Functionally, catalyzes the conversion of dihydroorotate to orotate with quinone as electron acceptor. This is Dihydroorotate dehydrogenase (quinone) from Kocuria rhizophila (strain ATCC 9341 / DSM 348 / NBRC 103217 / DC2201).